Here is a 172-residue protein sequence, read N- to C-terminus: Shikimate kinase (172 aa).

12–17 (GSGKTS) is a binding site for ATP. Thr16 is a binding site for Mg(2+). Substrate-binding residues include Asp34, Arg58, and Gly81. ATP is bound at residue Arg122. A substrate-binding site is contributed by Arg139.

The protein belongs to the shikimate kinase family. Monomer. Mg(2+) is required as a cofactor.

It is found in the cytoplasm. It carries out the reaction shikimate + ATP = 3-phosphoshikimate + ADP + H(+). The protein operates within metabolic intermediate biosynthesis; chorismate biosynthesis; chorismate from D-erythrose 4-phosphate and phosphoenolpyruvate: step 5/7. Functionally, catalyzes the specific phosphorylation of the 3-hydroxyl group of shikimic acid using ATP as a cosubstrate. The protein is Shikimate kinase of Dictyoglomus turgidum (strain DSM 6724 / Z-1310).